A 684-amino-acid polypeptide reads, in one-letter code: Methionine--tRNA ligase (684 aa).

A 'HIGH' region motif is present at residues 12–22; it reads PYANGSIHLGH. Cys143, Cys146, Cys156, and Cys159 together coordinate Zn(2+). A 'KMSKS' region motif is present at residues 339–343; sequence KMSKS. Residue Lys342 participates in ATP binding. Residues 581-684 enclose the tRNA-binding domain; it reads DFMKIDMRVA…AGAQPGDKVG (104 aa).

This sequence belongs to the class-I aminoacyl-tRNA synthetase family. MetG type 1 subfamily. Homodimer. Zn(2+) is required as a cofactor.

Its subcellular location is the cytoplasm. It carries out the reaction tRNA(Met) + L-methionine + ATP = L-methionyl-tRNA(Met) + AMP + diphosphate. Functionally, is required not only for elongation of protein synthesis but also for the initiation of all mRNA translation through initiator tRNA(fMet) aminoacylation. In Neisseria gonorrhoeae (strain ATCC 700825 / FA 1090), this protein is Methionine--tRNA ligase.